Consider the following 316-residue polypeptide: Aspartate carbamoyltransferase catalytic subunit (316 aa).

Positions 59 and 60 each coordinate carbamoyl phosphate. L-aspartate is bound at residue K88. Residues R109, H137, and Q140 each contribute to the carbamoyl phosphate site. L-aspartate contacts are provided by R170 and R232. Carbamoyl phosphate is bound by residues L269 and P270.

This sequence belongs to the aspartate/ornithine carbamoyltransferase superfamily. ATCase family. As to quaternary structure, heterooligomer of catalytic and regulatory chains.

The catalysed reaction is carbamoyl phosphate + L-aspartate = N-carbamoyl-L-aspartate + phosphate + H(+). It functions in the pathway pyrimidine metabolism; UMP biosynthesis via de novo pathway; (S)-dihydroorotate from bicarbonate: step 2/3. Its function is as follows. Catalyzes the condensation of carbamoyl phosphate and aspartate to form carbamoyl aspartate and inorganic phosphate, the committed step in the de novo pyrimidine nucleotide biosynthesis pathway. The chain is Aspartate carbamoyltransferase catalytic subunit from Methanobrevibacter smithii (strain ATCC 35061 / DSM 861 / OCM 144 / PS).